A 208-amino-acid chain; its full sequence is Small ribosomal subunit protein uS4 (208 aa).

Residues 30–49 form a disordered region; that stretch reads KSALEKRPYPPGQHGQRRSK. The 64-residue stretch at 98 to 161 folds into the S4 RNA-binding domain; it reads RRLDNVVYRM…KNNPQIQRSL (64 aa).

The protein belongs to the universal ribosomal protein uS4 family. As to quaternary structure, part of the 30S ribosomal subunit. Contacts protein S5. The interaction surface between S4 and S5 is involved in control of translational fidelity.

One of the primary rRNA binding proteins, it binds directly to 16S rRNA where it nucleates assembly of the body of the 30S subunit. Its function is as follows. With S5 and S12 plays an important role in translational accuracy. In Nitratiruptor sp. (strain SB155-2), this protein is Small ribosomal subunit protein uS4.